The chain runs to 500 residues: UBX domain-containing protein 5 (500 aa).

Over residues 50 to 61 the composition is skewed to low complexity; that stretch reads SNNTPTPSNSTP. The disordered stretch occupies residues 50-70; it reads SNNTPTPSNSTPMAPTSVDSD. S139 is modified (phosphoserine). Disordered regions lie at residues 142–169 and 371–399; these read NQRL…EEND and ESLN…QEPD. Residues 148 to 161 are compositionally biased toward low complexity; the sequence is TNTNTYINDNSSDS. A UBX domain is found at 415–493; sequence KPGITTRIQI…GLKNSSLLLE (79 aa).

Interacts with CDC48.

It is found in the nucleus. The protein localises to the cytoplasm. Functionally, involved in CDC48-dependent protein degradation through the ubiquitin/proteasome pathway. The sequence is that of UBX domain-containing protein 5 (UBX5) from Saccharomyces cerevisiae (strain ATCC 204508 / S288c) (Baker's yeast).